A 334-amino-acid polypeptide reads, in one-letter code: Glycerol-3-phosphate dehydrogenase [NAD(P)+] (334 aa).

The NADPH site is built by Trp13, Arg33, and Lys106. 3 residues coordinate sn-glycerol 3-phosphate: Lys106, Gly137, and Ser139. An NADPH-binding site is contributed by Ala141. 5 residues coordinate sn-glycerol 3-phosphate: Lys192, Asp245, Ser255, Arg256, and Asn257. The Proton acceptor role is filled by Lys192. Arg256 is a binding site for NADPH. 2 residues coordinate NADPH: Val280 and Glu282.

The protein belongs to the NAD-dependent glycerol-3-phosphate dehydrogenase family.

It localises to the cytoplasm. It catalyses the reaction sn-glycerol 3-phosphate + NAD(+) = dihydroxyacetone phosphate + NADH + H(+). The enzyme catalyses sn-glycerol 3-phosphate + NADP(+) = dihydroxyacetone phosphate + NADPH + H(+). Its pathway is membrane lipid metabolism; glycerophospholipid metabolism. Functionally, catalyzes the reduction of the glycolytic intermediate dihydroxyacetone phosphate (DHAP) to sn-glycerol 3-phosphate (G3P), the key precursor for phospholipid synthesis. The chain is Glycerol-3-phosphate dehydrogenase [NAD(P)+] from Chlamydia pneumoniae (Chlamydophila pneumoniae).